Here is a 447-residue protein sequence, read N- to C-terminus: tRNA modification GTPase MnmE (447 aa).

(6S)-5-formyl-5,6,7,8-tetrahydrofolate-binding residues include R24, E81, and K120. Residues 216 to 371 enclose the TrmE-type G domain; it reads GLNVAIAGKP…LRKELSNISG (156 aa). N226 contributes to the K(+) binding site. GTP is bound by residues 226 to 231, 245 to 251, and 270 to 273; these read NAGKSS, TDIAGTT, and DTAG. S230 contacts Mg(2+). K(+) contacts are provided by T245, I247, and T250. T251 provides a ligand contact to Mg(2+). K447 contributes to the (6S)-5-formyl-5,6,7,8-tetrahydrofolate binding site.

It belongs to the TRAFAC class TrmE-Era-EngA-EngB-Septin-like GTPase superfamily. TrmE GTPase family. In terms of assembly, homodimer. Heterotetramer of two MnmE and two MnmG subunits. It depends on K(+) as a cofactor.

The protein resides in the cytoplasm. Functionally, exhibits a very high intrinsic GTPase hydrolysis rate. Involved in the addition of a carboxymethylaminomethyl (cmnm) group at the wobble position (U34) of certain tRNAs, forming tRNA-cmnm(5)s(2)U34. This is tRNA modification GTPase MnmE from Vesicomyosocius okutanii subsp. Calyptogena okutanii (strain HA).